A 314-amino-acid polypeptide reads, in one-letter code: MAEFKHITVLLNEAVDGLNIKPDGTYVDCTLGGGGHSGLILSKLSENGKLYSFDQDITAINFNKDKFEEENELGKINFIKSNFRNISEELNKRNILGVDGILYDLGVSSPQFDNADRGFSYNYDAPLDMRMDQSQSLTARDVVNDWSYEQLVRIFFRYGEEKFAKSIARRIEKVRQQTPIETTGQLVDLIKEAIPAKARRKGGHPAKKTFQAIRIAVNDELGALEESLEQALDLLNPGGRISVITFQSLEDRLVKVMFKQKTSLPELPPGLPVIPDSQKVEYKLITRKPIVPSEDEITHNNRAHSAKLRIIEKL.

S-adenosyl-L-methionine-binding positions include G34–H36, D54, F83, D104, and Q111.

It belongs to the methyltransferase superfamily. RsmH family.

It is found in the cytoplasm. The enzyme catalyses cytidine(1402) in 16S rRNA + S-adenosyl-L-methionine = N(4)-methylcytidine(1402) in 16S rRNA + S-adenosyl-L-homocysteine + H(+). In terms of biological role, specifically methylates the N4 position of cytidine in position 1402 (C1402) of 16S rRNA. In Ligilactobacillus salivarius (strain UCC118) (Lactobacillus salivarius), this protein is Ribosomal RNA small subunit methyltransferase H.